Consider the following 200-residue polypeptide: NADH-quinone oxidoreductase subunit C (200 aa).

Belongs to the complex I 30 kDa subunit family. NDH-1 is composed of 14 different subunits. Subunits NuoB, C, D, E, F, and G constitute the peripheral sector of the complex.

It localises to the cell inner membrane. It carries out the reaction a quinone + NADH + 5 H(+)(in) = a quinol + NAD(+) + 4 H(+)(out). In terms of biological role, NDH-1 shuttles electrons from NADH, via FMN and iron-sulfur (Fe-S) centers, to quinones in the respiratory chain. The immediate electron acceptor for the enzyme in this species is believed to be ubiquinone. Couples the redox reaction to proton translocation (for every two electrons transferred, four hydrogen ions are translocated across the cytoplasmic membrane), and thus conserves the redox energy in a proton gradient. The polypeptide is NADH-quinone oxidoreductase subunit C (Burkholderia ambifaria (strain MC40-6)).